The following is a 69-amino-acid chain: Metallothionein-like protein 3 (69 aa).

Belongs to the metallothionein superfamily. Type 15 family. Expressed in leaf mesophyll cells, root tips, and at low levels in anthers.

In terms of biological role, metallothioneins have a high content of cysteine residues that bind various heavy metals. Functions as a metal chelator of copper (Cu) and zinc (Zn). Plays a role in Cu homeostasis, specifically in the remobilization of Cu from senescing leaves. The mobilization of Cu from internal sources is important for seed development. The protein is Metallothionein-like protein 3 of Arabidopsis thaliana (Mouse-ear cress).